The primary structure comprises 437 residues: Putative permease IIC component (437 aa).

Residues 2 to 437 (FDYILSLGGT…LFLRKRELSE (436 aa)) enclose the PTS EIIC type-2 domain. 12 helical membrane-spanning segments follow: residues 5–25 (ILSL…GLIF), 35–55 (AGVT…MAID), 88–108 (ATAI…AMLV), 134–154 (LMTG…ALSL), 173–193 (ISIP…LDAI), 215–235 (GMVG…GLAA), 236–256 (GEGF…MVLF), 302–322 (TIAV…ILPG), 325–345 (VLPL…TVIH), 354–374 (ISGV…APYF), 385–405 (FAGE…GWSI), and 410–430 (SLGI…VLFL).

It localises to the cell inner membrane. The phosphoenolpyruvate-dependent sugar phosphotransferase system (PTS), a major carbohydrate active -transport system, catalyzes the phosphorylation of incoming sugar substrates concomitant with their translocation across the cell membrane. The chain is Putative permease IIC component (sgcC) from Escherichia coli (strain K12).